The sequence spans 353 residues: Melatonin receptor type 1A (353 aa).

Residues 1–15 (MKGNGSTLLNASQQA) show a composition bias toward polar residues. Residues 1 to 23 (MKGNGSTLLNASQQAPGVGEGGG) are disordered. Topologically, residues 1–32 (MKGNGSTLLNASQQAPGVGEGGGPRPSWLAST) are extracellular. N-linked (GlcNAc...) asparagine glycosylation is found at asparagine 4 and asparagine 10. A helical transmembrane segment spans residues 33–53 (LAFILIFTIVVDILGNLLVIL). Residues 54–66 (SVYRNKKLRNAGN) lie on the Cytoplasmic side of the membrane. Residues 67–87 (IFVVSLAIADLVVAIYPYPLV) traverse the membrane as a helical segment. Topologically, residues 88–105 (LTSIFNNGWNLGYLHCQI) are extracellular. The cysteines at positions 103 and 180 are disulfide-linked. A helical membrane pass occupies residues 106–126 (SAFLMGLSVIGSIFNITGIAI). At 127-147 (NRYCYICHSLKYDRLYSNKNS) the chain is on the cytoplasmic side. A helical membrane pass occupies residues 148 to 168 (LCYVFLIWVLTLVAIMPNLQT). Topologically, residues 169–190 (GTLQYDPRIYSCTFTQSVSSAY) are extracellular. Residues 191–211 (TIAVVVFHFIVPMIIVIFCYL) traverse the membrane as a helical segment. Over 212–243 (RIWILVLQVRRRVKPDSKPRLKPQDFRNFVTM) the chain is Cytoplasmic. The chain crosses the membrane as a helical span at residues 244 to 264 (FVVFVLFAICWAPLNFIGLIV). Residues 265–277 (ASDPATMAPRIPE) lie on the Extracellular side of the membrane. A helical transmembrane segment spans residues 278-298 (WLFVASYYMAYFNSCLNAIIY). The Cytoplasmic segment spans residues 299–353 (GLLNQNFRQEYKRILVSLFTAKMCFVDSSNDPADKIKCKPAPLIANNNLIKVDSV).

This sequence belongs to the G-protein coupled receptor 1 family. As to expression, at least in the brain, more precisely in the pars tuberalis and the suprachiasmatic nucleus.

The protein localises to the cell membrane. Its function is as follows. High affinity receptor for melatonin. Likely to mediate the reproductive and circadian actions of melatonin. The activity of this receptor is mediated by pertussis toxin sensitive G proteins that inhibit adenylate cyclase activity. Possibly involved in sleep induction, by melatonin activation of the potassium channel KCNMA1/BK and the dissociation of G-beta and G-gamma subunits, thereby decreasing synaptic transmission. The chain is Melatonin receptor type 1A (MTNR1A) from Phodopus sungorus (Striped hairy-footed hamster).